A 284-amino-acid chain; its full sequence is 1D-myo-inositol 2-acetamido-2-deoxy-alpha-D-glucopyranoside deacetylase (284 aa).

3 residues coordinate Zn(2+): His12, Asp15, and His146.

Belongs to the MshB deacetylase family. It depends on Zn(2+) as a cofactor.

It carries out the reaction 1D-myo-inositol 2-acetamido-2-deoxy-alpha-D-glucopyranoside + H2O = 1D-myo-inositol 2-amino-2-deoxy-alpha-D-glucopyranoside + acetate. Catalyzes the deacetylation of 1D-myo-inositol 2-acetamido-2-deoxy-alpha-D-glucopyranoside (GlcNAc-Ins) in the mycothiol biosynthesis pathway. In Mycolicibacterium vanbaalenii (strain DSM 7251 / JCM 13017 / BCRC 16820 / KCTC 9966 / NRRL B-24157 / PYR-1) (Mycobacterium vanbaalenii), this protein is 1D-myo-inositol 2-acetamido-2-deoxy-alpha-D-glucopyranoside deacetylase.